Consider the following 251-residue polypeptide: Carboxy-S-adenosyl-L-methionine synthase (251 aa).

Residues Tyr48, 73–75 (GCS), Asn140, and Arg207 each bind S-adenosyl-L-methionine.

This sequence belongs to the class I-like SAM-binding methyltransferase superfamily. Cx-SAM synthase family. As to quaternary structure, homodimer.

The catalysed reaction is prephenate + S-adenosyl-L-methionine = carboxy-S-adenosyl-L-methionine + 3-phenylpyruvate + H2O. In terms of biological role, catalyzes the conversion of S-adenosyl-L-methionine (SAM) to carboxy-S-adenosyl-L-methionine (Cx-SAM). The sequence is that of Carboxy-S-adenosyl-L-methionine synthase from Hydrogenovibrio crunogenus (strain DSM 25203 / XCL-2) (Thiomicrospira crunogena).